A 570-amino-acid chain; its full sequence is E3 ubiquitin-protein ligase ZFP91 (570 aa).

Residues Met-1–Glu-12 show a composition bias toward basic and acidic residues. The disordered stretch occupies residues Met-1–Pro-306. Composition is skewed to low complexity over residues Gln-31–Gly-43 and Ala-59–Val-68. Basic residues predominate over residues Ser-69–Ser-82. 2 positions are modified to phosphoserine: Ser-83 and Ser-103. The segment covering Gln-94–Pro-104 has biased composition (polar residues). Residues Val-119–Glu-128 are compositionally biased toward basic and acidic residues. Residues Ser-207–Glu-223 show a composition bias toward acidic residues. 2 stretches are compositionally biased toward basic and acidic residues: residues Ile-224–Lys-245 and Lys-252–Glu-269. The segment covering Val-270–Glu-282 has biased composition (acidic residues). 5 consecutive C2H2-type zinc fingers follow at residues Val-311 to His-336, Tyr-342 to His-366, Tyr-372 to His-394, Leu-400 to His-422, and Phe-430 to His-453. The interval Leu-338–Asp-368 is interaction with MAP3K14/NIK.

It belongs to the krueppel C2H2-type zinc-finger protein family. As to quaternary structure, interacts with MAP3K14/NIK. As to expression, expressed ubiquitously, particularly at high level in testis. Isoform 2 is testis specific.

Its subcellular location is the nucleus. The catalysed reaction is S-ubiquitinyl-[E2 ubiquitin-conjugating enzyme]-L-cysteine + [acceptor protein]-L-lysine = [E2 ubiquitin-conjugating enzyme]-L-cysteine + N(6)-ubiquitinyl-[acceptor protein]-L-lysine.. It participates in protein modification; protein ubiquitination. Atypical E3 ubiquitin-protein ligase that mediates 'Lys-63'-linked ubiquitination of MAP3K14/NIK, leading to stabilize and activate MAP3K14/NIK. It thereby acts as an activator of the non-canonical NF-kappa-B2/NFKB2 pathway. May also play an important role in cell proliferation and/or anti-apoptosis. The sequence is that of E3 ubiquitin-protein ligase ZFP91 (ZFP91) from Homo sapiens (Human).